The primary structure comprises 623 residues: Serine/threonine-protein kinase MAK (623 aa).

Positions Tyr-4 to Phe-284 constitute a Protein kinase domain. Residues Leu-10–Val-18 and Lys-33 each bind ATP. The Proton acceptor role is filled by Asp-125. Thr-157 is subject to Phosphothreonine; by autocatalysis. Phosphotyrosine; by autocatalysis is present on Tyr-159. Disordered regions lie at residues Ile-328 to Trp-396 and Gly-416 to Glu-469. Residues Gln-356–Gln-369 show a composition bias toward low complexity. The span at Ser-446 to Asn-455 shows a compositional bias: polar residues.

It belongs to the protein kinase superfamily. CMGC Ser/Thr protein kinase family. CDC2/CDKX subfamily. Interacts with RP1. Interacts with AR and CDK20. Found in a complex containing MAK, AR and NCOA3. Interacts with FZR1 (via WD repeats). Mg(2+) is required as a cofactor. In terms of processing, autophosphorylated. Phosphorylated on serine and threonine residues. As to expression, expressed in prostate cancer cell lines at generally higher levels than in normal prostate epithelial cell lines. Isoform 1 is expressed in kidney, testis, lung, trachea, and retina. Isoform 2 is retina-specific where it is expressed in rod and cone photoreceptors.

Its subcellular location is the nucleus. The protein resides in the cytoplasm. The protein localises to the cytoskeleton. It is found in the microtubule organizing center. It localises to the centrosome. Its subcellular location is the spindle. The protein resides in the midbody. The protein localises to the cell projection. It is found in the cilium. It localises to the photoreceptor outer segment. Its subcellular location is the photoreceptor inner segment. It catalyses the reaction L-seryl-[protein] + ATP = O-phospho-L-seryl-[protein] + ADP + H(+). The catalysed reaction is L-threonyl-[protein] + ATP = O-phospho-L-threonyl-[protein] + ADP + H(+). Its function is as follows. Essential for the regulation of ciliary length and required for the long-term survival of photoreceptors. Phosphorylates FZR1 in a cell cycle-dependent manner. Plays a role in the transcriptional coactivation of AR. Could play an important function in spermatogenesis. May play a role in chromosomal stability in prostate cancer cells. This Homo sapiens (Human) protein is Serine/threonine-protein kinase MAK (MAK).